A 60-amino-acid chain; its full sequence is Metallothionein B (60 aa).

Positions 1–28 are beta; it reads MDPCECTKSGTCNCGGSCTCTNCSCTSC. Residues C4, C6, C12, C14, C18, C20, C23, C25, C28, C32, C33, C35, C36, C40, C43, C47, C49, C54, C58, and C59 each coordinate a divalent metal cation. The tract at residues 29-60 is alpha; it reads KKSCCPCCPSGCTKCASGCVCKGKTCDTSCCQ.

The protein belongs to the metallothionein superfamily. Type 1 family.

Functionally, metallothioneins have a high content of cysteine residues that bind various heavy metals. The sequence is that of Metallothionein B (mtb) from Chaenocephalus aceratus (Blackfin icefish).